Consider the following 261-residue polypeptide: Serine/arginine-rich splicing factor 12 (261 aa).

An RRM domain is found at 10 to 88; that stretch reads TSLFIRNVAD…RQIEIQFAQG (79 aa). Residues 86 to 261 are disordered; sequence AQGDRKTPGQ…SRSYRHKNSW (176 aa). Over residues 88–109 the composition is skewed to basic and acidic residues; the sequence is GDRKTPGQMKSKERHPCSPSDH. 2 stretches are compositionally biased toward basic residues: residues 110 to 122 and 178 to 191; these read RRSR…RTRS and GRSR…RSKS. Low complexity predominate over residues 192 to 209; the sequence is IGKSQSSSPQKQTSSGTK. Polar residues predominate over residues 230–239; sequence GYTNSETKVQ. Residues 240 to 261 are compositionally biased toward basic residues; sequence TAKHSHFRSHSRSRSYRHKNSW.

It belongs to the splicing factor SR family. Expressed in testis.

It localises to the nucleus. Its function is as follows. Splicing factor that seems to antagonize SR proteins in pre-mRNA splicing regulation. In Homo sapiens (Human), this protein is Serine/arginine-rich splicing factor 12 (SRSF12).